A 381-amino-acid chain; its full sequence is Subtilisin amylosacchariticus (381 aa).

The first 29 residues, 1-29 (MRSKKLWISLLFALTLIFTMAFSNMSAQA), serve as a signal peptide directing secretion. Positions 30–106 (AGKSSTEKKY…VEEDHIAHEY (77 aa)) are excised as a propeptide. Residues 38–103 (KYIVGFKQTM…VAYVEEDHIA (66 aa)) form the Inhibitor I9 domain. Glutamine 108 lines the Ca(2+) pocket. One can recognise a Peptidase S8 domain in the interval 111–380 (PYGISQIKAP…KGLINVQAAA (270 aa)). The active-site Charge relay system is aspartate 138. Aspartate 147 is a binding site for Ca(2+). Histidine 170 serves as the catalytic Charge relay system. Positions 181, 183, 185, 187, 275, 277, and 280 each coordinate Ca(2+). Serine 327 acts as the Charge relay system in catalysis.

The protein belongs to the peptidase S8 family. Requires Ca(2+) as cofactor.

The protein localises to the secreted. The catalysed reaction is Hydrolysis of proteins with broad specificity for peptide bonds, and a preference for a large uncharged residue in P1. Hydrolyzes peptide amides.. Functionally, subtilisin is an extracellular alkaline serine protease, it catalyzes the hydrolysis of proteins and peptide amides. The protein is Subtilisin amylosacchariticus (apr) of Bacillus subtilis subsp. amylosacchariticus.